A 118-amino-acid chain; its full sequence is Large ribosomal subunit protein bL19 (118 aa).

It belongs to the bacterial ribosomal protein bL19 family.

This protein is located at the 30S-50S ribosomal subunit interface and may play a role in the structure and function of the aminoacyl-tRNA binding site. This chain is Large ribosomal subunit protein bL19, found in Salinispora tropica (strain ATCC BAA-916 / DSM 44818 / JCM 13857 / NBRC 105044 / CNB-440).